A 420-amino-acid chain; its full sequence is Histidine--tRNA ligase (420 aa).

This sequence belongs to the class-II aminoacyl-tRNA synthetase family. As to quaternary structure, homodimer.

It localises to the cytoplasm. It catalyses the reaction tRNA(His) + L-histidine + ATP = L-histidyl-tRNA(His) + AMP + diphosphate + H(+). This Staphylococcus saprophyticus subsp. saprophyticus (strain ATCC 15305 / DSM 20229 / NCIMB 8711 / NCTC 7292 / S-41) protein is Histidine--tRNA ligase.